Consider the following 208-residue polypeptide: Holliday junction branch migration complex subunit RuvA (208 aa).

Residues 1–64 (MIGRLHGTVA…DDGQALYGFA (64 aa)) form a domain I region. Residues 65 to 143 (SRAERDLFRV…GLLPAASGGV (79 aa)) form a domain II region. The disordered stretch occupies residues 139-162 (ASGGVPARTGSGEQLDAPAGPQGS). Positions 144–157 (PARTGSGEQLDAPA) are flexible linker. Positions 158–208 (GPQGSREDAVSALVALGYKPAEAGRLVNAVPGANDLPSEELIRRALQAAVR) are domain III.

The protein belongs to the RuvA family. As to quaternary structure, homotetramer. Forms an RuvA(8)-RuvB(12)-Holliday junction (HJ) complex. HJ DNA is sandwiched between 2 RuvA tetramers; dsDNA enters through RuvA and exits via RuvB. An RuvB hexamer assembles on each DNA strand where it exits the tetramer. Each RuvB hexamer is contacted by two RuvA subunits (via domain III) on 2 adjacent RuvB subunits; this complex drives branch migration. In the full resolvosome a probable DNA-RuvA(4)-RuvB(12)-RuvC(2) complex forms which resolves the HJ.

Its subcellular location is the cytoplasm. Its function is as follows. The RuvA-RuvB-RuvC complex processes Holliday junction (HJ) DNA during genetic recombination and DNA repair, while the RuvA-RuvB complex plays an important role in the rescue of blocked DNA replication forks via replication fork reversal (RFR). RuvA specifically binds to HJ cruciform DNA, conferring on it an open structure. The RuvB hexamer acts as an ATP-dependent pump, pulling dsDNA into and through the RuvAB complex. HJ branch migration allows RuvC to scan DNA until it finds its consensus sequence, where it cleaves and resolves the cruciform DNA. This chain is Holliday junction branch migration complex subunit RuvA, found in Alkalilimnicola ehrlichii (strain ATCC BAA-1101 / DSM 17681 / MLHE-1).